Here is a 1202-residue protein sequence, read N- to C-terminus: CHD3-type chromatin-remodeling factor CHR7 (1202 aa).

2 Chromo domains span residues 45 to 109 (GEIE…HPHL) and 142 to 201 (KTVD…RDKY). The 169-residue stretch at 237–405 (RYSWSKKTNV…FALMHFLDAD (169 aa)) folds into the Helicase ATP-binding domain. ATP is bound at residue 250–257 (DEMGLGKT). Positions 356-359 (DEGH) match the DEAH box motif. Residues 528–679 (LLDKMMVKLK…HLVVGKQHLC (152 aa)) form the Helicase C-terminal domain. Positions 838 to 872 (TSDEEEEADEPEAARQRKPRTVTRPYRKRARDNSE) are disordered. Residues 853–867 (QRKPRTVTRPYRKRA) are compositionally biased toward basic residues.

This sequence belongs to the SNF2/RAD54 helicase family.

It is found in the nucleus. Functionally, chromatin remodeling factor that represses the expression of embryonic trait genes upon and after seed germination and thus enables the developmental switch to post-germinative growth. In Arabidopsis thaliana (Mouse-ear cress), this protein is CHD3-type chromatin-remodeling factor CHR7.